We begin with the raw amino-acid sequence, 565 residues long: Pentatricopeptide repeat-containing protein At3g20730 (565 aa).

PPR repeat units follow at residues 12–46 (SPSL…GFCS), 47–77 (NLQL…ISKR), 78–112 (DVVS…DVKA), 113–147 (NQFT…NCAG), 148–178 (NLIV…MKER), 179–213 (DLVS…GKKP), 214–248 (DCFT…GFGR), 249–279 (SSAL…TKKR), 280–315 (DLLS…KTKM), 316–351 (DEVV…QIRF), 352–382 (DVAL…MKEK), 383–417 (DVRS…RIKP), 418–448 (NDVT…MINK), and 454–484 (REEH…KEGI). The interval 491–565 (TWGAFLDACR…NKAPGYSLVY (75 aa)) is type E motif; degenerate.

This sequence belongs to the PPR family. PCMP-E subfamily.

This Arabidopsis thaliana (Mouse-ear cress) protein is Pentatricopeptide repeat-containing protein At3g20730 (PCMP-E94).